The following is a 1925-amino-acid chain: Plexin-D1 (1925 aa).

Residues 1–18 are compositionally biased toward low complexity; that stretch reads MAPRAAGGAPLSARAAAA. The disordered stretch occupies residues 1 to 23; it reads MAPRAAGGAPLSARAAAASPPPF. The signal sequence occupies residues 1–46; it reads MAPRAAGGAPLSARAAAASPPPFQTPPRCPVPLLLLLLLGAARAGA. Positions 47 to 546 constitute a Sema domain; the sequence is LEIQRRFPSP…TSHQMARVKV (500 aa). The Extracellular segment spans residues 47–1271; it reads LEIQRRFPSP…TLQLGGSETA (1225 aa). The N-linked (GlcNAc...) asparagine glycan is linked to Asn86. Cystine bridges form between Cys104/Cys114 and Cys140/Cys148. N-linked (GlcNAc...) asparagine glycans are attached at residues Asn155, Asn188, and Asn224. Cystine bridges form between Cys322–Cys445 and Cys345–Cys389. Asn481 and Asn500 each carry an N-linked (GlcNAc...) asparagine glycan. Cystine bridges form between Cys549/Cys566, Cys555/Cys600, Cys558/Cys575, Cys569/Cys581, and Cys637/Cys661. Residue Asn583 is glycosylated (N-linked (GlcNAc...) asparagine). 11 N-linked (GlcNAc...) asparagine glycosylation sites follow: Asn696, Asn736, Asn802, Asn965, Asn1017, Asn1060, Asn1099, Asn1118, Asn1132, Asn1237, and Asn1257. 3 IPT/TIG domains span residues 891–979, 981–1066, and 1069–1160; these read PEIH…FSYV, PLVH…FWYM, and PVIT…LDPE. A helical membrane pass occupies residues 1272–1292; the sequence is IIVSIVICSVLLLLSVVALFV. Over 1293 to 1925 the chain is Cytoplasmic; sequence FCTKSRRAER…DNIYECYSEA (633 aa).

It belongs to the plexin family. Interacts with NRP1 and SEMA4A. Interacts with SH3BP1; they dissociate upon SEMA3E binding to PLXND1 allowing SH3BP1 to transduce downstream signal through RAC1 inactivation. In terms of tissue distribution, detected at low levels in heart, placenta, lung, skeletal muscle, kidney, thymus and liver. Detected at very low levels in brain, colon, spleen, small intestine and peripheral blood leukocytes.

The protein localises to the cell membrane. Its subcellular location is the cell projection. It is found in the lamellipodium membrane. Functionally, cell surface receptor for SEMA4A and for class 3 semaphorins, such as SEMA3A, SEMA3C and SEMA3E. Plays an important role in cell-cell signaling, and in regulating the migration of a wide spectrum of cell types. Regulates the migration of thymocytes in the medulla. Regulates endothelial cell migration. Plays an important role in ensuring the specificity of synapse formation. Required for normal development of the heart and vasculature. Mediates anti-angiogenic signaling in response to SEMA3E. This is Plexin-D1 (PLXND1) from Homo sapiens (Human).